Here is a 260-residue protein sequence, read N- to C-terminus: HLA class II histocompatibility antigen, DP alpha 1 chain (260 aa).

Residues Met1–Gly28 form the signal peptide. The interval Ala29–Asn115 is alpha-1. Residues Ala29 to Glu222 are Extracellular-facing. N-linked (GlcNAc...) asparagine glycans are attached at residues Asn109 and Asn149. The interval Asp116 to Trp209 is alpha-2. The Ig-like C1-type domain maps to Pro118–Glu210. A disulfide bridge links Cys138 with Cys194. A connecting peptide region spans residues Glu210–Glu222. The helical transmembrane segment at Thr223 to Ile245 threads the bilayer. Residues Lys246 to Leu260 are Cytoplasmic-facing.

The protein belongs to the MHC class II family. As to quaternary structure, heterodimer of an alpha and a beta subunit; also referred as MHC class II molecule. In the endoplasmic reticulum (ER) it forms a heterononamer; 3 MHC class II molecules bind to a CD74 homotrimer (also known as invariant chain or HLA class II histocompatibility antigen gamma chain). In the endosomal/lysosomal system; CD74 undergoes sequential degradation by various proteases; leaving a small fragment termed CLIP on each MHC class II molecule. MHC class II molecule interacts with HLA_DM, and HLA_DO in B-cells, in order to release CLIP and facilitate the binding of antigenic peptides.

It is found in the cell membrane. The protein localises to the endoplasmic reticulum membrane. The protein resides in the golgi apparatus. Its subcellular location is the trans-Golgi network membrane. It localises to the endosome membrane. It is found in the lysosome membrane. Functionally, binds peptides derived from antigens that access the endocytic route of antigen presenting cells (APC) and presents them on the cell surface for recognition by the CD4 T-cells. The peptide binding cleft accommodates peptides of 10-30 residues. The peptides presented by MHC class II molecules are generated mostly by degradation of proteins that access the endocytic route, where they are processed by lysosomal proteases and other hydrolases. Exogenous antigens that have been endocytosed by the APC are thus readily available for presentation via MHC II molecules, and for this reason this antigen presentation pathway is usually referred to as exogenous. As membrane proteins on their way to degradation in lysosomes as part of their normal turn-over are also contained in the endosomal/lysosomal compartments, exogenous antigens must compete with those derived from endogenous components. Autophagy is also a source of endogenous peptides, autophagosomes constitutively fuse with MHC class II loading compartments. In addition to APCs, other cells of the gastrointestinal tract, such as epithelial cells, express MHC class II molecules and CD74 and act as APCs, which is an unusual trait of the GI tract. To produce a MHC class II molecule that presents an antigen, three MHC class II molecules (heterodimers of an alpha and a beta chain) associate with a CD74 trimer in the ER to form a heterononamer. Soon after the entry of this complex into the endosomal/lysosomal system where antigen processing occurs, CD74 undergoes a sequential degradation by various proteases, including CTSS and CTSL, leaving a small fragment termed CLIP (class-II-associated invariant chain peptide). The removal of CLIP is facilitated by HLA-DM via direct binding to the alpha-beta-CLIP complex so that CLIP is released. HLA-DM stabilizes MHC class II molecules until primary high affinity antigenic peptides are bound. The MHC II molecule bound to a peptide is then transported to the cell membrane surface. In B-cells, the interaction between HLA-DM and MHC class II molecules is regulated by HLA-DO. Primary dendritic cells (DCs) also to express HLA-DO. Lysosomal microenvironment has been implicated in the regulation of antigen loading into MHC II molecules, increased acidification produces increased proteolysis and efficient peptide loading. The polypeptide is HLA class II histocompatibility antigen, DP alpha 1 chain (HLA-DPA1) (Homo sapiens (Human)).